Reading from the N-terminus, the 170-residue chain is MASANPETAKPTPATVDMANPEELKKVFDQFDSNGDGKISVLELGGVFKAMGTSYTETELNRVLEEVDTDRDGYINLDEFSTLCRSSSSAAEIRDAFDLYDQDKNGLISASELHQVLNRLGMSCSVEDCTRMIGPVDADGDGNVNFEEFQKMMTSSSLLNSNGSAAPPST.

A2 carries the N-acetylalanine modification. EF-hand domains lie at 19-54 (ANPE…MGTS), 55-85 (YTET…TLCR), 88-123 (SSAA…LGMS), and 136-159 (VDAD…SSLL). Residues D32, N34, D36, K38, E43, D68, D70, D72, Y74, E79, D101, D103, N105, E112, D137, D139, D141, N143, and E148 each contribute to the Ca(2+) site.

Potential calcium sensor. This is Probable calcium-binding protein CML27 (CML27) from Arabidopsis thaliana (Mouse-ear cress).